Here is a 380-residue protein sequence, read N- to C-terminus: 1-deoxy-D-xylulose 5-phosphate reductoisomerase (380 aa).

NADPH-binding residues include Thr9, Gly10, Ser11, Val12, Arg36, and Asn117. Lys118 provides a ligand contact to 1-deoxy-D-xylulose 5-phosphate. Residue Glu119 coordinates NADPH. Asp139 provides a ligand contact to Mn(2+). 4 residues coordinate 1-deoxy-D-xylulose 5-phosphate: Ser140, Glu141, Ser165, and His188. Glu141 is a binding site for Mn(2+). An NADPH-binding site is contributed by Gly194. 1-deoxy-D-xylulose 5-phosphate is bound by residues Ser201, Asn206, Lys207, and Glu210. Glu210 is a Mn(2+) binding site.

The protein belongs to the DXR family. It depends on Mg(2+) as a cofactor. Mn(2+) is required as a cofactor.

It catalyses the reaction 2-C-methyl-D-erythritol 4-phosphate + NADP(+) = 1-deoxy-D-xylulose 5-phosphate + NADPH + H(+). It participates in isoprenoid biosynthesis; isopentenyl diphosphate biosynthesis via DXP pathway; isopentenyl diphosphate from 1-deoxy-D-xylulose 5-phosphate: step 1/6. Catalyzes the NADPH-dependent rearrangement and reduction of 1-deoxy-D-xylulose-5-phosphate (DXP) to 2-C-methyl-D-erythritol 4-phosphate (MEP). This chain is 1-deoxy-D-xylulose 5-phosphate reductoisomerase, found in Aquifex aeolicus (strain VF5).